Here is a 462-residue protein sequence, read N- to C-terminus: Hyaluronidase-1 (462 aa).

The signal sequence occupies residues 1-52; that stretch reads MLGLTQHAQKVWRMKPFSPEVSPGSSPATAGHLLRISTLFLTLLELAQVCRG. 2 cysteine pairs are disulfide-bonded: Cys-71–Cys-361 and Cys-235–Cys-249. 2 N-linked (GlcNAc...) asparagine glycosylation sites follow: Asn-98 and Asn-127. Glu-159 (proton donor) is an active-site residue. Asn-244, Asn-265, and Asn-378 each carry an N-linked (GlcNAc...) asparagine glycan. 3 disulfides stabilise this stretch: Cys-386–Cys-397, Cys-391–Cys-446, and Cys-448–Cys-457. The region spanning 446-457 is the EGF-like domain; that stretch reads CRCYRGWRGKWC.

This sequence belongs to the glycosyl hydrolase 56 family. In terms of tissue distribution, highly expressed in liver, kidney, lung and skin.

It localises to the secreted. The protein resides in the lysosome. It carries out the reaction Random hydrolysis of (1-&gt;4)-linkages between N-acetyl-beta-D-glucosamine and D-glucuronate residues in hyaluronate.. In terms of biological role, may have a role in promoting tumor progression. May block the TGFB1-enhanced cell growth. The chain is Hyaluronidase-1 (Hyal1) from Mus musculus (Mouse).